Consider the following 195-residue polypeptide: UPF0301 protein CCNA_03506 (195 aa).

This sequence belongs to the UPF0301 (AlgH) family.

The polypeptide is UPF0301 protein CCNA_03506 (Caulobacter vibrioides (strain NA1000 / CB15N) (Caulobacter crescentus)).